The sequence spans 322 residues: Corticotropin-releasing factor-binding protein (322 aa).

The signal sequence occupies residues 1 to 24; the sequence is MSPNFKLQCHFILIFLTALRGESR. Intrachain disulfides connect Cys-60/Cys-81, Cys-104/Cys-141, Cys-183/Cys-205, Cys-237/Cys-264, and Cys-277/Cys-318. The N-linked (GlcNAc...) asparagine glycan is linked to Asn-204.

It belongs to the CRF-binding protein family.

The protein localises to the secreted. In terms of biological role, binds CRF and inactivates it. May prevent inappropriate pituitary-adrenal stimulation in pregnancy. This chain is Corticotropin-releasing factor-binding protein (CRHBP), found in Homo sapiens (Human).